Consider the following 178-residue polypeptide: Adenine phosphoribosyltransferase (178 aa).

Belongs to the purine/pyrimidine phosphoribosyltransferase family. As to quaternary structure, homodimer.

It localises to the cytoplasm. It carries out the reaction AMP + diphosphate = 5-phospho-alpha-D-ribose 1-diphosphate + adenine. It functions in the pathway purine metabolism; AMP biosynthesis via salvage pathway; AMP from adenine: step 1/1. Functionally, catalyzes a salvage reaction resulting in the formation of AMP, that is energically less costly than de novo synthesis. The polypeptide is Adenine phosphoribosyltransferase (Novosphingobium aromaticivorans (strain ATCC 700278 / DSM 12444 / CCUG 56034 / CIP 105152 / NBRC 16084 / F199)).